The sequence spans 101 residues: Large ribosomal subunit protein uL23 (101 aa).

The protein belongs to the universal ribosomal protein uL23 family. As to quaternary structure, part of the 50S ribosomal subunit. Contacts protein L29, and trigger factor when it is bound to the ribosome.

In terms of biological role, one of the early assembly proteins it binds 23S rRNA. One of the proteins that surrounds the polypeptide exit tunnel on the outside of the ribosome. Forms the main docking site for trigger factor binding to the ribosome. The protein is Large ribosomal subunit protein uL23 of Lactobacillus helveticus (strain DPC 4571).